Consider the following 428-residue polypeptide: ATP-dependent RNA helicase RhlB (428 aa).

The Q motif signature appears at 9 to 37; the sequence is QKFSDFALHPLVLEALEKKGFQHCTPIQA. Residues 40–219 form the Helicase ATP-binding domain; the sequence is LPLTLSGRDV…FEQMNNAEYV (180 aa). 53–60 contacts ATP; sequence AQTGTGKT. The short motif at 165-168 is the DEAD box element; the sequence is DEAD. The region spanning 245–390 is the Helicase C-terminal domain; that stretch reads RLLQTLIEEE…VSKYNSDALL (146 aa). A disordered region spans residues 392–428; the sequence is DLPAPKRLARPRGGNGPRRNSAPRRGGAPRNNRKRSG. The span at 408 to 421 shows a compositional bias: low complexity; the sequence is PRRNSAPRRGGAPR.

The protein belongs to the DEAD box helicase family. RhlB subfamily. In terms of assembly, component of the RNA degradosome, which is a multiprotein complex involved in RNA processing and mRNA degradation.

It is found in the cytoplasm. It catalyses the reaction ATP + H2O = ADP + phosphate + H(+). In terms of biological role, DEAD-box RNA helicase involved in RNA degradation. Has RNA-dependent ATPase activity and unwinds double-stranded RNA. The chain is ATP-dependent RNA helicase RhlB from Serratia proteamaculans (strain 568).